Consider the following 71-residue polypeptide: uncharacterized protein (71 aa).

A helical transmembrane segment spans residues 12–34; sequence GYLSLTLVTLPVCSSLHCYFLWT.

The protein localises to the membrane. This is an uncharacterized protein from Dictyostelium discoideum (Social amoeba).